Consider the following 251-residue polypeptide: Probable transcriptional regulatory protein cauri_1421 (251 aa).

The disordered stretch occupies residues Met-1–Arg-21.

This sequence belongs to the TACO1 family.

The protein localises to the cytoplasm. The protein is Probable transcriptional regulatory protein cauri_1421 of Corynebacterium aurimucosum (strain ATCC 700975 / DSM 44827 / CIP 107346 / CN-1) (Corynebacterium nigricans).